Here is a 209-residue protein sequence, read N- to C-terminus: uncharacterized protein (209 aa).

The next 3 helical transmembrane spans lie at 26–48, 147–169, and 179–196; these read LRYF…GLAV, AYLV…PFLM, and IVAA…VYLL.

The protein localises to the cell membrane. This is an uncharacterized protein from Archaeoglobus fulgidus (strain ATCC 49558 / DSM 4304 / JCM 9628 / NBRC 100126 / VC-16).